The chain runs to 678 residues: UvrABC system protein B (678 aa).

A Helicase ATP-binding domain is found at 31–417 (EGLENGLAHQ…KSGGEIIDQV (387 aa)). 44 to 51 (GVTGSGKT) contributes to the ATP binding site. The short motif at 97–120 (YYDYYQPEAYVPSSDTFIEKDASI) is the Beta-hairpin element. One can recognise a Helicase C-terminal domain in the interval 436–589 (QVDDLLSEAR…QMKYNEARGI (154 aa)). Residues 638-673 (QQQIKKLEQQMYKYAQDLEFEKAAAVRDQLQQLREH) enclose the UVR domain.

Belongs to the UvrB family. As to quaternary structure, forms a heterotetramer with UvrA during the search for lesions. Interacts with UvrC in an incision complex.

It is found in the cytoplasm. Functionally, the UvrABC repair system catalyzes the recognition and processing of DNA lesions. A damage recognition complex composed of 2 UvrA and 2 UvrB subunits scans DNA for abnormalities. Upon binding of the UvrA(2)B(2) complex to a putative damaged site, the DNA wraps around one UvrB monomer. DNA wrap is dependent on ATP binding by UvrB and probably causes local melting of the DNA helix, facilitating insertion of UvrB beta-hairpin between the DNA strands. Then UvrB probes one DNA strand for the presence of a lesion. If a lesion is found the UvrA subunits dissociate and the UvrB-DNA preincision complex is formed. This complex is subsequently bound by UvrC and the second UvrB is released. If no lesion is found, the DNA wraps around the other UvrB subunit that will check the other stand for damage. In Pasteurella multocida (strain Pm70), this protein is UvrABC system protein B.